The primary structure comprises 382 residues: D-galactonate dehydratase (382 aa).

Aspartate 183 is a Mg(2+) binding site. The active-site Proton donor is the histidine 185. Glutamate 209 and glutamate 235 together coordinate Mg(2+). The active-site Proton acceptor is the histidine 285.

This sequence belongs to the mandelate racemase/muconate lactonizing enzyme family. GalD subfamily. The cofactor is Mg(2+).

The enzyme catalyses D-galactonate = 2-dehydro-3-deoxy-D-galactonate + H2O. It participates in carbohydrate acid metabolism; D-galactonate degradation; D-glyceraldehyde 3-phosphate and pyruvate from D-galactonate: step 1/3. In terms of biological role, catalyzes the dehydration of D-galactonate to 2-keto-3-deoxy-D-galactonate. The chain is D-galactonate dehydratase from Escherichia coli (strain UTI89 / UPEC).